A 362-amino-acid chain; its full sequence is Phosphoserine aminotransferase (362 aa).

The L-glutamate site is built by serine 9 and arginine 42. Pyridoxal 5'-phosphate is bound by residues 76–77 (GR), tryptophan 102, threonine 153, aspartate 174, and glutamine 197. Lysine 198 is subject to N6-(pyridoxal phosphate)lysine. Pyridoxal 5'-phosphate is bound at residue 239–240 (NT).

Belongs to the class-V pyridoxal-phosphate-dependent aminotransferase family. SerC subfamily. Homodimer. The cofactor is pyridoxal 5'-phosphate.

It is found in the cytoplasm. It catalyses the reaction O-phospho-L-serine + 2-oxoglutarate = 3-phosphooxypyruvate + L-glutamate. The enzyme catalyses 4-(phosphooxy)-L-threonine + 2-oxoglutarate = (R)-3-hydroxy-2-oxo-4-phosphooxybutanoate + L-glutamate. It functions in the pathway amino-acid biosynthesis; L-serine biosynthesis; L-serine from 3-phospho-D-glycerate: step 2/3. The protein operates within cofactor biosynthesis; pyridoxine 5'-phosphate biosynthesis; pyridoxine 5'-phosphate from D-erythrose 4-phosphate: step 3/5. Catalyzes the reversible conversion of 3-phosphohydroxypyruvate to phosphoserine and of 3-hydroxy-2-oxo-4-phosphonooxybutanoate to phosphohydroxythreonine. This is Phosphoserine aminotransferase from Klebsiella pneumoniae subsp. pneumoniae (strain ATCC 700721 / MGH 78578).